A 439-amino-acid chain; its full sequence is Xylose isomerase (439 aa).

Catalysis depends on residues histidine 99 and aspartate 102. 7 residues coordinate Mg(2+): glutamate 230, glutamate 266, histidine 269, aspartate 294, aspartate 305, aspartate 307, and aspartate 337.

This sequence belongs to the xylose isomerase family. As to quaternary structure, homotetramer. The cofactor is Mg(2+).

It is found in the cytoplasm. It carries out the reaction alpha-D-xylose = alpha-D-xylulofuranose. The sequence is that of Xylose isomerase from Oceanobacillus iheyensis (strain DSM 14371 / CIP 107618 / JCM 11309 / KCTC 3954 / HTE831).